Consider the following 110-residue polypeptide: Large ribosomal subunit protein uL22 (110 aa).

It belongs to the universal ribosomal protein uL22 family. In terms of assembly, part of the 50S ribosomal subunit.

This protein binds specifically to 23S rRNA; its binding is stimulated by other ribosomal proteins, e.g. L4, L17, and L20. It is important during the early stages of 50S assembly. It makes multiple contacts with different domains of the 23S rRNA in the assembled 50S subunit and ribosome. In terms of biological role, the globular domain of the protein is located near the polypeptide exit tunnel on the outside of the subunit, while an extended beta-hairpin is found that lines the wall of the exit tunnel in the center of the 70S ribosome. The polypeptide is Large ribosomal subunit protein uL22 (Marinobacter nauticus (strain ATCC 700491 / DSM 11845 / VT8) (Marinobacter aquaeolei)).